The following is a 279-amino-acid chain: Small ribosomal subunit protein uS2 (279 aa).

3 stretches are compositionally biased toward acidic residues: residues 1–18 (MTENDNEVVEVVDDDEAV), 28–42 (TATEAEADTETDESN), and 65–81 (ADAEPDDELEGPTFDED). The interval 1 to 81 (MTENDNEVVE…ELEGPTFDED (81 aa)) is disordered.

The protein belongs to the universal ribosomal protein uS2 family.

This is Small ribosomal subunit protein uS2 from Haloquadratum walsbyi (strain DSM 16790 / HBSQ001).